Consider the following 137-residue polypeptide: Large ribosomal subunit protein bL12 (137 aa).

This sequence belongs to the bacterial ribosomal protein bL12 family. As to quaternary structure, homodimer. Part of the ribosomal stalk of the 50S ribosomal subunit. Forms a multimeric L10(L12)X complex, where L10 forms an elongated spine to which 2 to 4 L12 dimers bind in a sequential fashion. Binds GTP-bound translation factors.

Functionally, forms part of the ribosomal stalk which helps the ribosome interact with GTP-bound translation factors. Is thus essential for accurate translation. This is Large ribosomal subunit protein bL12 from Synechococcus sp. (strain JA-3-3Ab) (Cyanobacteria bacterium Yellowstone A-Prime).